We begin with the raw amino-acid sequence, 200 residues long: MNLNTASGGTVTVSEVAFGKDFNEPLVHQVVTAFLAGARQGSKAQKNRSDVSGGGRKPWRQKGTGRARAGTIRSPIWRGGGKTFAAVPRDHSQKVNRKMYRGALQCIMSELVRQERLVVVDEFTVDSPKTKAVAAKLKGMELTSVLIVTDNVDENLFMASRNLPKVDVRDSQGVDPVSLIAFEKVLITVPALKKLEEALA.

The interval 42-69 (SKAQKNRSDVSGGGRKPWRQKGTGRARA) is disordered.

This sequence belongs to the universal ribosomal protein uL4 family. In terms of assembly, part of the 50S ribosomal subunit.

Functionally, one of the primary rRNA binding proteins, this protein initially binds near the 5'-end of the 23S rRNA. It is important during the early stages of 50S assembly. It makes multiple contacts with different domains of the 23S rRNA in the assembled 50S subunit and ribosome. Forms part of the polypeptide exit tunnel. In Alcanivorax borkumensis (strain ATCC 700651 / DSM 11573 / NCIMB 13689 / SK2), this protein is Large ribosomal subunit protein uL4.